A 201-amino-acid chain; its full sequence is Urease accessory protein UreG (201 aa).

Residue 11 to 18 (GPVGSGKT) participates in GTP binding.

Belongs to the SIMIBI class G3E GTPase family. UreG subfamily. As to quaternary structure, homodimer. UreD, UreF and UreG form a complex that acts as a GTP-hydrolysis-dependent molecular chaperone, activating the urease apoprotein by helping to assemble the nickel containing metallocenter of UreC. The UreE protein probably delivers the nickel.

It localises to the cytoplasm. In terms of biological role, facilitates the functional incorporation of the urease nickel metallocenter. This process requires GTP hydrolysis, probably effectuated by UreG. In Prochlorococcus marinus subsp. pastoris (strain CCMP1986 / NIES-2087 / MED4), this protein is Urease accessory protein UreG.